The following is a 243-amino-acid chain: Urease accessory protein UreF (243 aa).

It belongs to the UreF family. In terms of assembly, ureD, UreF and UreG form a complex that acts as a GTP-hydrolysis-dependent molecular chaperone, activating the urease apoprotein by helping to assemble the nickel containing metallocenter of UreC. The UreE protein probably delivers the nickel.

It localises to the cytoplasm. Its function is as follows. Required for maturation of urease via the functional incorporation of the urease nickel metallocenter. The chain is Urease accessory protein UreF from Xanthobacter autotrophicus (strain ATCC BAA-1158 / Py2).